A 302-amino-acid chain; its full sequence is Lipooligosaccharide biosynthesis protein lex-1 (302 aa).

7 consecutive repeat copies span residues 42-45, 46-49, 50-53, 54-57, 58-61, 62-65, and 66-69. The segment at 42 to 69 is 7 X 4 AA tandem repeats of S-I-N-Q; sequence SINQSINQSINQSINQSINQSINQSINQ.

The protein belongs to the glycosyltransferase 25 family.

In terms of biological role, involved in extracellular lipooligosaccharide (LOS) biosynthesis and virulence expression. Involved in the synthesis of the oligosaccharide moiety of the LOS molecule by adding GalNAc. This chain is Lipooligosaccharide biosynthesis protein lex-1 (lex1), found in Haemophilus influenzae (strain ATCC 51907 / DSM 11121 / KW20 / Rd).